The following is a 298-amino-acid chain: Peroxisomal 2,4-dienoyl-CoA reductase [(3E)-enoyl-CoA-producing] (298 aa).

19 to 24 (GGGSGI) lines the NADP(+) pocket. R44 is a binding site for substrate. Position 69 (D69) interacts with NADP(+). Substrate-binding positions include R71, F101, and 109-111 (SPN). Residues K173 and 200–206 (PGPIGGT) each bind NADP(+). The segment at 279–298 (SRAVEKRSRAKPVGLPTSKL) is disordered. Residues 296-298 (SKL) carry the Microbody targeting signal motif.

The protein belongs to the short-chain dehydrogenases/reductases (SDR) family. 2,4-dienoyl-CoA reductase subfamily.

Its subcellular location is the peroxisome. It carries out the reaction a (2E,4Z)-dienoyl-CoA + NADPH + H(+) = a 4,5-saturated-(3E)-enoyl-CoA + NADP(+). It catalyses the reaction a (2E,4E)-dienoyl-CoA + NADPH + H(+) = a 4,5-saturated-(3E)-enoyl-CoA + NADP(+). In terms of biological role, auxiliary enzyme of beta-oxidation. Participates in the degradation of unsaturated fatty enoyl-CoA esters having double bonds in both even- and odd-numbered positions in peroxisome. Catalyzes the NADP-dependent reduction of 2,4-dienoyl-CoA to yield trans-3-enoyl-CoA. In Arabidopsis thaliana (Mouse-ear cress), this protein is Peroxisomal 2,4-dienoyl-CoA reductase [(3E)-enoyl-CoA-producing].